The primary structure comprises 29 residues: Cyclotide mela-1 (29 aa).

Residues 1 to 29 constitute a cross-link (cyclopeptide (Gly-Asp)); sequence GKYTCGETCFKGKCYTPGCTCSYPICKKD. 3 disulfides stabilise this stretch: Cys-5–Cys-19, Cys-9–Cys-21, and Cys-14–Cys-26.

Post-translationally, this is a cyclic peptide. Contains 3 disulfide bonds.

Its function is as follows. Probably participates in a plant defense mechanism (Potential). Binds to and induces leakage in phospholipd membranes, particularly ones containing 1-palmitoyl-2-oleophosphatidylethanolamine (POPE). In vitro, displays cytotoxicity against cultured cells but no hemolytic activity towards fresh erythrocytes. Not active against Gram-negative bacterium E.coli ATCC 25922 or Gram-positive bacterium S.aureus ATCC 25923 up to a concentration of 64 uM. In Melicytus latifolius (Norfolk Island mahoe), this protein is Cyclotide mela-1.